We begin with the raw amino-acid sequence, 507 residues long: L-threonine dehydratase biosynthetic IlvA (507 aa).

N6-(pyridoxal phosphate)lysine is present on lysine 52. Pyridoxal 5'-phosphate is bound by residues asparagine 79, 182 to 186, and serine 309; that span reads GGGGL. ACT-like domains follow at residues 333–404 and 427–498; these read AVFA…DLTH and RLFR…EESA.

The protein belongs to the serine/threonine dehydratase family. As to quaternary structure, homotetramer. Requires pyridoxal 5'-phosphate as cofactor.

It carries out the reaction L-threonine = 2-oxobutanoate + NH4(+). It participates in amino-acid biosynthesis; L-isoleucine biosynthesis; 2-oxobutanoate from L-threonine: step 1/1. Functionally, catalyzes the anaerobic formation of alpha-ketobutyrate and ammonia from threonine in a two-step reaction. The first step involved a dehydration of threonine and a production of enamine intermediates (aminocrotonate), which tautomerizes to its imine form (iminobutyrate). Both intermediates are unstable and short-lived. The second step is the nonenzymatic hydrolysis of the enamine/imine intermediates to form 2-ketobutyrate and free ammonia. In the low water environment of the cell, the second step is accelerated by RidA. The polypeptide is L-threonine dehydratase biosynthetic IlvA (ilvA) (Burkholderia multivorans (strain ATCC 17616 / 249)).